The primary structure comprises 382 residues: MRLERALRARQLIPLAAIWLLVGCGKQETVESTAVPPEVGVYTVKAQALTLTTDLPGRTSAYRVSEVRPQASGILQKRMFVEGAEVKQGEQLYQIDPRTYEALLARAEASLLTAQNLARRYERLLDTNAISQQQYDDAMATWKQAQAEAQMARINMQYTKVLAPITGRIGRSAVTEGALVTNGQAQELATVTQLDPIYVDVNQPITRLLGLKRALESGRLQRVGDNQAQVSLTLDDGTPYPLKGVLKFSEVSVAPSTGSVTLRAEFPNPDHKLLPGMFVHALLNEGEQQAAILVPHQAVGRDARGVPTVWVVKPDNTVESREVQTLQTVGNAWLLGAGINDGERVITEGVQLARSGITVKPVAAKNVKLMSEFGSQVQAQAH.

The signal sequence occupies residues 1-23 (MRLERALRARQLIPLAAIWLLVG). A lipid anchor (N-palmitoyl cysteine) is attached at Cys24. A lipid anchor (S-diacylglycerol cysteine) is attached at Cys24. Positions 100–136 (YEALLARAEASLLTAQNLARRYERLLDTNAISQQQYD) form a coiled coil.

It belongs to the membrane fusion protein (MFP) (TC 8.A.1) family.

The protein resides in the cell inner membrane. In terms of biological role, the periplasmic linker protein component of an inducible organic solvent efflux pump. Involved in export of toluene and styrene but not of m-xylene, propylbenzene or ethylbenzene. Is not involved in antibiotic or AMP efflux. This Pseudomonas putida (strain DOT-T1E) protein is Toluene efflux pump periplasmic linker protein TtgD (ttgD).